Reading from the N-terminus, the 308-residue chain is Coenzyme PQQ synthesis protein B (308 aa).

The protein belongs to the PqqB family.

Its pathway is cofactor biosynthesis; pyrroloquinoline quinone biosynthesis. Functionally, may be involved in the transport of PQQ or its precursor to the periplasm. The polypeptide is Coenzyme PQQ synthesis protein B (Klebsiella pneumoniae subsp. pneumoniae (strain ATCC 700721 / MGH 78578)).